Reading from the N-terminus, the 61-residue chain is Large ribosomal subunit protein bL28 (61 aa).

The protein belongs to the bacterial ribosomal protein bL28 family.

This Nautilia profundicola (strain ATCC BAA-1463 / DSM 18972 / AmH) protein is Large ribosomal subunit protein bL28.